The sequence spans 466 residues: Asparagine--tRNA ligase (466 aa).

It belongs to the class-II aminoacyl-tRNA synthetase family. Homodimer.

It localises to the cytoplasm. The enzyme catalyses tRNA(Asn) + L-asparagine + ATP = L-asparaginyl-tRNA(Asn) + AMP + diphosphate + H(+). The sequence is that of Asparagine--tRNA ligase from Shewanella sp. (strain ANA-3).